The chain runs to 152 residues: Deoxyuridine 5'-triphosphate nucleotidohydrolase (152 aa).

Residues 71-73, N84, 88-90, and M98 contribute to the substrate site; these read RSG and LID.

Belongs to the dUTPase family. It depends on Mg(2+) as a cofactor.

The enzyme catalyses dUTP + H2O = dUMP + diphosphate + H(+). It functions in the pathway pyrimidine metabolism; dUMP biosynthesis; dUMP from dCTP (dUTP route): step 2/2. Its function is as follows. This enzyme is involved in nucleotide metabolism: it produces dUMP, the immediate precursor of thymidine nucleotides and it decreases the intracellular concentration of dUTP so that uracil cannot be incorporated into DNA. This is Deoxyuridine 5'-triphosphate nucleotidohydrolase from Serratia proteamaculans (strain 568).